The primary structure comprises 140 residues: Small ribosomal subunit protein eS17y (140 aa).

Belongs to the eukaryotic ribosomal protein eS17 family.

The sequence is that of Small ribosomal subunit protein eS17y (RPS17B) from Arabidopsis thaliana (Mouse-ear cress).